A 118-amino-acid chain; its full sequence is Autophagy-related protein 8 (118 aa).

The Phosphatidylethanolamine amidated glycine moiety is linked to residue Gly-116. The propeptide at Glu-117–Ala-118 is removed in mature form.

The protein belongs to the ATG8 family. Conjugation to phosphatidylethanolamine (PE) leads to homodimerization. Interacts with ATG1, ATG3, ATG4, ATG7 and ATG12. The C-terminal Glu-117 and Ala-118 residues of ATG8 are removed by ATG4 to expose Gly-116 at the C-terminus. This Gly-116 forms then a thioester bond with the 'Cys-550' of ATG7 (E1-like activating enzyme) before being transferred to the 'Cys-244' of ATG3 (the specific E2 conjugating enzyme), in order to be finally amidated with phosphatidylethanolamine. This lipid modification anchors ATG8 to membranes and can be reversed by ATG4, releasing soluble ATG8.

The protein localises to the cytoplasmic vesicle. It is found in the cvt vesicle membrane. It localises to the autophagosome membrane. The protein resides in the vacuole membrane. Ubiquitin-like modifier involved in cytoplasm to vacuole transport (Cvt) vesicles and autophagosome formation. With ATG4, mediates the delivery of the vesicles and autophagosomes to the vacuole via the microtubule cytoskeleton. Required for selective autophagic degradation of the nucleus (nucleophagy) as well as for mitophagy which contributes to regulate mitochondrial quantity and quality by eliminating the mitochondria to a basal level to fulfill cellular energy requirements and preventing excess ROS production. Also participates in membrane fusion events that take place in the early secretory pathway. Also involved in endoplasmic reticulum-specific autophagic process and is essential for the survival of cells subjected to severe ER stress. The ATG8-PE conjugate mediates tethering between adjacent membranes and stimulates membrane hemifusion, leading to expansion of the autophagosomal membrane during autophagy. Moreover not only conjugation, but also subsequent ATG8-PE deconjugation is an important step required to facilitate multiple events during macroautophagy, and especially for efficient autophagosome biogenesis, the assembly of ATG9-containing tubulovesicular clusters into phagophores/autophagosomes, and for the disassembly of PAS-associated ATG components. Autophagy is required for proper vegetative growth, asexual/sexual reproduction, and full virulence. Autophagy is particularly involved in the biosynthesis of deoxynivalenol (DON), an important virulence determinant. In Gibberella zeae (strain ATCC MYA-4620 / CBS 123657 / FGSC 9075 / NRRL 31084 / PH-1) (Wheat head blight fungus), this protein is Autophagy-related protein 8.